A 319-amino-acid chain; its full sequence is L-lactate dehydrogenase (319 aa).

Residues 10 to 11, Asp32, Arg37, Tyr62, and 76 to 77 contribute to the NAD(+) site; these read RV and GV. Substrate-binding positions include Gln79, Arg85, and 117-120; that span reads NPVD. Residues 115–117 and Ser140 each bind NAD(+); that span reads VTN. Residue 145–148 participates in substrate binding; the sequence is DTAR. Positions 150 and 165 each coordinate beta-D-fructose 1,6-bisphosphate. Catalysis depends on His172, which acts as the Proton acceptor. The residue at position 217 (Tyr217) is a Phosphotyrosine. Thr226 provides a ligand contact to substrate.

This sequence belongs to the LDH/MDH superfamily. LDH family. Homotetramer.

The protein resides in the cytoplasm. It catalyses the reaction (S)-lactate + NAD(+) = pyruvate + NADH + H(+). It functions in the pathway fermentation; pyruvate fermentation to lactate; (S)-lactate from pyruvate: step 1/1. Allosterically activated by fructose 1,6-bisphosphate (FBP). Inactivated by Mn(2+), Co(2+), Cd(2+) and Zn(2+). Catalyzes the conversion of lactate to pyruvate. It is stereospecific for L(+)-lactate. This is L-lactate dehydrogenase from Thermotoga maritima (strain ATCC 43589 / DSM 3109 / JCM 10099 / NBRC 100826 / MSB8).